The primary structure comprises 116 residues: Protein Wnt-5b (116 aa).

A lipid anchor (O-palmitoleoyl serine; by PORCN) is attached at Ser1. 2 N-linked (GlcNAc...) asparagine glycosylation sites follow: Asn69 and Asn83. Cys82 and Cys97 are oxidised to a cystine.

It belongs to the Wnt family. In terms of processing, palmitoleoylation is required for efficient binding to frizzled receptors. Depalmitoleoylation leads to Wnt signaling pathway inhibition.

The protein resides in the secreted. It localises to the extracellular space. It is found in the extracellular matrix. Functionally, ligand for members of the frizzled family of seven transmembrane receptors. Probable developmental protein. May be a signaling molecule which affects the development of discrete regions of tissues. Is likely to signal over only few cell diameters. This is Protein Wnt-5b (WNT-5B) from Plestiodon skiltonianus (Western skink).